Reading from the N-terminus, the 665-residue chain is UvrABC system protein B (665 aa).

The 154-residue stretch at 25–178 (ASLQAEHRFQ…RQLLRDLTTI (154 aa)) folds into the Helicase ATP-binding domain. 38-45 (GATGTGKT) lines the ATP pocket. The Beta-hairpin motif lies at 91–114 (YYDYYQPEAYIPVTDTYIEKTAAI). The Helicase C-terminal domain maps to 429 to 595 (QVDDLLGEVR…PIVKKASNAI (167 aa)). A UVR domain is found at 626-661 (PELITQLEAQMKEAAKKLEFEEAAKYRDRIKQLRDK).

It belongs to the UvrB family. As to quaternary structure, forms a heterotetramer with UvrA during the search for lesions. Interacts with UvrC in an incision complex.

It is found in the cytoplasm. The UvrABC repair system catalyzes the recognition and processing of DNA lesions. A damage recognition complex composed of 2 UvrA and 2 UvrB subunits scans DNA for abnormalities. Upon binding of the UvrA(2)B(2) complex to a putative damaged site, the DNA wraps around one UvrB monomer. DNA wrap is dependent on ATP binding by UvrB and probably causes local melting of the DNA helix, facilitating insertion of UvrB beta-hairpin between the DNA strands. Then UvrB probes one DNA strand for the presence of a lesion. If a lesion is found the UvrA subunits dissociate and the UvrB-DNA preincision complex is formed. This complex is subsequently bound by UvrC and the second UvrB is released. If no lesion is found, the DNA wraps around the other UvrB subunit that will check the other stand for damage. The protein is UvrABC system protein B of Cyanothece sp. (strain PCC 7425 / ATCC 29141).